We begin with the raw amino-acid sequence, 388 residues long: Gastricsin (388 aa).

Positions methionine 1–alanine 16 are cleaved as a signal peptide. The propeptide at threonine 17–leucine 59 is activation peptide. Positions tyrosine 73–alanine 385 constitute a Peptidase A1 domain. The active site involves aspartate 91. 2 cysteine pairs are disulfide-bonded: cysteine 104–cysteine 109 and cysteine 267–cysteine 271. Residue aspartate 276 is part of the active site. Cysteine 310 and cysteine 343 are oxidised to a cystine.

It belongs to the peptidase A1 family.

The protein resides in the secreted. It carries out the reaction More restricted specificity than pepsin A, but shows preferential cleavage at Tyr-|-Xaa bonds. High activity on hemoglobin.. With respect to regulation, inhibited by pepstatin. Functionally, hydrolyzes a variety of proteins. This Callithrix jacchus (White-tufted-ear marmoset) protein is Gastricsin (PGC).